The primary structure comprises 543 residues: Aluminum-activated malate transporter 14 (543 aa).

The next 6 membrane-spanning stretches (helical) occupy residues 56–76 (VGVS…FKGI), 80–100 (AIWA…ATLC), 106–126 (GLGT…ANDS), 129–149 (IFRA…ITYL), 164–184 (LIFL…DTVI), and 191–211 (FYTI…VFPI). Residues 416-438 (DTNEAASYQNTGTPRGERMSRFG) are disordered. Over residues 419–428 (EAASYQNTGT) the composition is skewed to polar residues. The stretch at 445-472 (RLRADTLERRSAAATNERKILRQQLSRI) forms a coiled coil.

The protein belongs to the aromatic acid exporter (TC 2.A.85) family.

It is found in the membrane. Its function is as follows. Malate transporter. The chain is Aluminum-activated malate transporter 14 (ALMT14) from Arabidopsis thaliana (Mouse-ear cress).